We begin with the raw amino-acid sequence, 428 residues long: Histidinol dehydrogenase (428 aa).

Positions 127, 189, and 212 each coordinate NAD(+). S235, Q257, and H260 together coordinate substrate. Zn(2+) is bound by residues Q257 and H260. Catalysis depends on proton acceptor residues E325 and H326. Positions 326, 359, 413, and 418 each coordinate substrate. A Zn(2+)-binding site is contributed by D359. H418 contacts Zn(2+).

It belongs to the histidinol dehydrogenase family. The cofactor is Zn(2+).

It carries out the reaction L-histidinol + 2 NAD(+) + H2O = L-histidine + 2 NADH + 3 H(+). The protein operates within amino-acid biosynthesis; L-histidine biosynthesis; L-histidine from 5-phospho-alpha-D-ribose 1-diphosphate: step 9/9. Catalyzes the sequential NAD-dependent oxidations of L-histidinol to L-histidinaldehyde and then to L-histidine. This Prochlorococcus marinus subsp. pastoris (strain CCMP1986 / NIES-2087 / MED4) protein is Histidinol dehydrogenase.